The primary structure comprises 505 residues: TBC1 domain family member 22B (505 aa).

An N-acetylalanine modification is found at Ala-2. Residues Ser-58 and Ser-116 each carry the phosphoserine modification. The tract at residues 105-146 (SKLRVKPERSQSTTSDVPANYKVIKSSSDAQLSRNSSDTCLR) is disordered. Residues 129 to 146 (KSSSDAQLSRNSSDTCLR) are compositionally biased toward polar residues. Ser-154 carries the phosphoserine modification. The region spanning 210-434 (GVPREVRPIT…RLWDTYQSEP (225 aa)) is the Rab-GAP TBC domain.

Interacts with ACBD3 and ARFGEF1. Interacts with YWHAB, YWHAE, YWHAG, YWHAH, YWHAQ and YWHAZ.

In terms of biological role, may act as a GTPase-activating protein for Rab family protein(s). The protein is TBC1 domain family member 22B (TBC1D22B) of Homo sapiens (Human).